Consider the following 363-residue polypeptide: Phosphatidylinositol transfer protein sfh-5 (363 aa).

Residues 1 to 84 form a disordered region; it reads MSTQPSDSAE…SPADIKDSVS (84 aa). The span at 36–46 shows a compositional bias: basic and acidic residues; the sequence is DAAKHAEEEPK. Residues 64–76 show a composition bias toward low complexity; that stretch reads KPAAAPAQEADSP. Residues 180–354 enclose the CRAL-TRIO domain; that stretch reads AGDEPAVDEP…EYGGKGADLK (175 aa). The heme site is built by tyrosine 200, arginine 220, histidine 253, tyrosine 255, and lysine 289.

This sequence belongs to the SFH5 family. It depends on heme b as a cofactor.

It is found in the cytoplasm. Its subcellular location is the endoplasmic reticulum membrane. It localises to the microsome membrane. It carries out the reaction a 1,2-diacyl-sn-glycero-3-phospho-(1D-myo-inositol)(in) = a 1,2-diacyl-sn-glycero-3-phospho-(1D-myo-inositol)(out). In terms of biological role, non-classical phosphatidylinositol (PtdIns) transfer protein (PITP), which exhibits PtdIns-binding/transfer activity in the absence of detectable PtdCho-binding/transfer activity. Regulates PtdIns(4,5)P2 homeostasis at the plasma membrane. Heme-binding protein that may play a role in organic oxidant-induced stress responses. The chain is Phosphatidylinositol transfer protein sfh-5 (sfh-5) from Neurospora crassa (strain ATCC 24698 / 74-OR23-1A / CBS 708.71 / DSM 1257 / FGSC 987).